The sequence spans 290 residues: Appressorium protein ROW2 (290 aa).

An N-terminal signal peptide occupies residues 1–19 (MFTKSVFIALVAGVLGVTA). Positions 266 to 290 (AIKTPSKRSVMATHVKRSPEWEEEP) are disordered.

The protein resides in the secreted. It is found in the nucleus. Plays a role in the formation of the appressorium, a specialized infection structure with the purpose of penetrating the host surface, and is required for proper remodeling of the appressorium wall and vesicle secretion. The chain is Appressorium protein ROW2 from Mycosarcoma maydis (Corn smut fungus).